The primary structure comprises 54 residues: Large ribosomal subunit protein bL33B (54 aa).

The protein belongs to the bacterial ribosomal protein bL33 family.

The chain is Large ribosomal subunit protein bL33B from Myxococcus xanthus (strain DK1622).